A 172-amino-acid chain; its full sequence is uncharacterized protein (172 aa).

Positions 3 to 171 (KKVAIILSNE…FNREIVKQLQ (169 aa)) constitute a PfpI endopeptidase domain.

This sequence belongs to the peptidase C56 family.

This is an uncharacterized protein from Staphylococcus haemolyticus (strain JCSC1435).